The following is a 426-amino-acid chain: Serine protease HTRA2, mitochondrial (426 aa).

A compositionally biased stretch (low complexity) spans 31 to 58 (SSTCNSTNTDNGSHNTNYNSSNNNNNNN). Residues 31 to 59 (SSTCNSTNTDNGSHNTNYNSSNNNNNNND) are disordered. The chain crosses the membrane as a helical span at residues 71 to 87 (FLVPFSLGALASSVVAG). Residues 79–82 (ALAS) carry the IAP-binding motif. Positions 143-306 (SNGSGFVIEQ…IPIDYVKLFL (164 aa)) are serine protease. Catalysis depends on charge relay system residues histidine 161, aspartate 193, and serine 270. Positions 329–414 (MGITMLTLTP…DLDMVILRGV (86 aa)) constitute a PDZ domain.

The protein belongs to the peptidase S1C family. As to quaternary structure, interacts with th/DIAP1 (via BIR 2 domain).

Its subcellular location is the mitochondrion intermembrane space. It localises to the mitochondrion membrane. It carries out the reaction Cleavage of non-polar aliphatic amino-acids at the P1 position, with a preference for Val, Ile and Met. At the P2 and P3 positions, Arg is selected most strongly with a secondary preference for other hydrophilic residues.. Serine protease that shows proteolytic activity against a non-specific substrate beta-casein. Promotes or induces cell death either by direct binding to and inhibition of BIRC proteins (also called inhibitor of apoptosis proteins, IAPs), leading to an increase in caspase activity, or by a BIRC inhibition-independent, caspase-independent and serine protease activity-dependent mechanism. Can antagonize antiapoptotic activity of th/Diap1 by directly inducing the degradation of th/Diap1. This chain is Serine protease HTRA2, mitochondrial, found in Drosophila grimshawi (Hawaiian fruit fly).